Here is a 400-residue protein sequence, read N- to C-terminus: Chalcone synthase C2 (400 aa).

Residue C168 is part of the active site.

This sequence belongs to the thiolase-like superfamily. Chalcone/stilbene synthases family.

It carries out the reaction (E)-4-coumaroyl-CoA + 3 malonyl-CoA + 3 H(+) = 2',4,4',6'-tetrahydroxychalcone + 3 CO2 + 4 CoA. The protein operates within secondary metabolite biosynthesis; flavonoid biosynthesis. Its function is as follows. The primary product of this enzyme is 4,2',4',6'-tetrahydroxychalcone (also termed naringenin-chalcone or chalcone) which can under specific conditions spontaneously isomerize into naringenin. This is Chalcone synthase C2 (C2) from Zea mays (Maize).